A 158-amino-acid chain; its full sequence is Transcription elongation factor GreA (158 aa).

It belongs to the GreA/GreB family.

In terms of biological role, necessary for efficient RNA polymerase transcription elongation past template-encoded arresting sites. The arresting sites in DNA have the property of trapping a certain fraction of elongating RNA polymerases that pass through, resulting in locked ternary complexes. Cleavage of the nascent transcript by cleavage factors such as GreA or GreB allows the resumption of elongation from the new 3'terminus. GreA releases sequences of 2 to 3 nucleotides. This is Transcription elongation factor GreA from Agrobacterium fabrum (strain C58 / ATCC 33970) (Agrobacterium tumefaciens (strain C58)).